The primary structure comprises 409 residues: Histidine--tRNA ligase (409 aa).

Belongs to the class-II aminoacyl-tRNA synthetase family. Homodimer.

The protein resides in the cytoplasm. It catalyses the reaction tRNA(His) + L-histidine + ATP = L-histidyl-tRNA(His) + AMP + diphosphate + H(+). This Campylobacter fetus subsp. fetus (strain 82-40) protein is Histidine--tRNA ligase.